A 311-amino-acid chain; its full sequence is MIEFEKPNITKIDENKDYGKFVIEPLERGYGTTLGNSLRRVLLASLPGAAVTSINIDGVLHEFDTVPGVREDVMQIILNIKGIAVKSYVEDEKIIELDVEGPAEVTAGDILTDSDIEIVNPDHYLFTIGEGSSLKATMTVNSGRGYVPADENKKDNAPVGTLAVDSIYTPVTKVNYQVEPARVGSNDGFDKLTLEILTNGTIIPEDALGLSARILTEHLDLFTNLTEIAKSTEVMKEADTESDDRILDRTIEELDLSVRSYNCLKRAGINTVHDLTEKSEAEMMKVRNLGRKSLEEVKLKLIDLGLGLKDK.

The tract at residues 1–226 is alpha N-terminal domain (alpha-NTD); that stretch reads MIEFEKPNIT…EHLDLFTNLT (226 aa). The alpha C-terminal domain (alpha-CTD) stretch occupies residues 243 to 311; it reads DDRILDRTIE…IDLGLGLKDK (69 aa).

Belongs to the RNA polymerase alpha chain family. Homodimer. The RNAP catalytic core consists of 2 alpha, 1 beta, 1 beta' and 1 omega subunit. When a sigma factor is associated with the core the holoenzyme is formed, which can initiate transcription.

It catalyses the reaction RNA(n) + a ribonucleoside 5'-triphosphate = RNA(n+1) + diphosphate. Functionally, DNA-dependent RNA polymerase catalyzes the transcription of DNA into RNA using the four ribonucleoside triphosphates as substrates. The protein is DNA-directed RNA polymerase subunit alpha of Streptococcus pneumoniae serotype 4 (strain ATCC BAA-334 / TIGR4).